A 455-amino-acid polypeptide reads, in one-letter code: Rho GTPase-activating protein 3 (455 aa).

Residues 1-12 are compositionally biased toward polar residues; sequence MTNFSRSKSTGT. The tract at residues 1 to 68 is disordered; that stretch reads MTNFSRSKST…HASRSGNGSG (68 aa). Over residues 24-33 the composition is skewed to basic and acidic residues; it reads GPDKYENIHN. Over residues 43 to 54 the composition is skewed to low complexity; that stretch reads STTSTDYYDAST. Residues 55–64 are compositionally biased toward polar residues; sequence PLSSHASRSG. Residues 105–118 form the CRIB domain; it reads IGWPTEVKHVSHVT. Residues 153–331 form the Rho-GAP domain; sequence KSMQCSYDDR…LILMNLKERE (179 aa). Disordered regions lie at residues 342–366 and 432–455; these read KQTSDPSEEWESQHSEILSPEKPNN and FVSNRDEGRKGREAWSSRLSSLPW. The span at 435–446 shows a compositional bias: basic and acidic residues; the sequence is NRDEGRKGREAW.

Expressed in differentiating xylem cells.

It localises to the cell membrane. Functionally, acts as a GTPase activator for the Rac-type GTPase by converting it to an inactive GDP-bound state. Involved in secondary wall pattern formation. In association with ROPGEF4, mediates local activation of ARAC10/ROP11 to initiate the distinct pattern of secondary cell walls in xylem cells. This is Rho GTPase-activating protein 3 (ROPGAP3) from Arabidopsis thaliana (Mouse-ear cress).